We begin with the raw amino-acid sequence, 696 residues long: MEASVILPILKKKLAFLSGGKDRRSGLILTIPLCLEQTSMDELSVTLDYLLSIPSEKCKARGFTVIVDGRKSQWNVVKTVVLMLQNVVPAEVSLVCVVKPDEFWDKKVTHFCFWKEKDRLGFEVILVSANKLTRYIEPCQLTEDFGGSLTYDHMDWLNKRLVFEKFTKESTSLLDELALINNGSDKGNEQEKERSVDLNFLPSVDPETVLQTGHELLSELQQRRFNGSDGGVSWSPMDDELLAQPQVMKLLDSLREQYTRYQEVCRQRSKRTQLEEIQQKVMQVVNWLEGPGSEQLRAQWGIGDSIRASQALQQKHEEIESQHSEWFAVYVELNQQIAALLNAGDEEDLVELKSLQQQLSDVCYRQASQLEFRQNLLQAALEFHGVAQDLSQQLDGLLGMLCVDVAPADGASIQQTLKLLEEKLKSVDVGLQGLREKGQGLLDQISNQASWAYGKDVTIENKENVDHIQGVMEDMQLRKQRCEDMVDVRRLKMLQMVQLFKCEEDASQAVEWLSELLDALLKTHIRLGDDAQETKVLLEKHRKFVDVAQSTYDYGRQLLQATVVLCQSLRCTSRSSGDTLPRLNRVWKQFTVASEERVHRLEMAIAFHSNAEKILQDCPEEPEAMNDEEQFEEIEAIGKSLLDRLTIPVVYPDGTEQYFGSPSDMASTAEHIRDRMKLVSLKRQQLRHPELVTTES.

The region spanning 1–153 (MEASVILPIL…DFGGSLTYDH (153 aa)) is the CRAL-TRIO domain. Spectrin repeat units lie at residues 275–378 (EEIQ…NLLQ), 381–494 (LEFH…LKML), and 500–602 (FKCE…HRLE).

It belongs to the SOLO family. As to quaternary structure, interacts (via the spectrin 1 repeat) with TRPC4 and TRPC5 (via CIRB domain). Interacts with CTNNB1.

Functionally, may act as the primary docking protein directing membrane turnover and assembly of the transient receptor potential channels TRPC4 and TRPC5. Binds phospholipids such as phosphatidylinositol monophosphates, phosphatidylinositol diphosphates (PIP2s) and phosphatidic acid, but not less polar lipids including phosphatidylcholine, phosphatidylserine, and phosphatidylinositol. The binding to PIP2s is calcium dependent. Might be involved in the plasma membrane localization of CTNNB1. This is SEC14 domain and spectrin repeat-containing protein 1 (Sestd1) from Mus musculus (Mouse).